A 339-amino-acid chain; its full sequence is Biotin synthase (339 aa).

The region spanning 55-282 is the Radical SAM core domain; sequence NAVQLSTLLS…KAVVRLSAGR (228 aa). Positions 70, 74, and 77 each coordinate [4Fe-4S] cluster. The [2Fe-2S] cluster site is built by Cys-114, Cys-145, Cys-205, and Arg-277.

This sequence belongs to the radical SAM superfamily. Biotin synthase family. In terms of assembly, homodimer. It depends on [4Fe-4S] cluster as a cofactor. Requires [2Fe-2S] cluster as cofactor.

The enzyme catalyses (4R,5S)-dethiobiotin + (sulfur carrier)-SH + 2 reduced [2Fe-2S]-[ferredoxin] + 2 S-adenosyl-L-methionine = (sulfur carrier)-H + biotin + 2 5'-deoxyadenosine + 2 L-methionine + 2 oxidized [2Fe-2S]-[ferredoxin]. The protein operates within cofactor biosynthesis; biotin biosynthesis; biotin from 7,8-diaminononanoate: step 2/2. In terms of biological role, catalyzes the conversion of dethiobiotin (DTB) to biotin by the insertion of a sulfur atom into dethiobiotin via a radical-based mechanism. The chain is Biotin synthase from Burkholderia cenocepacia (strain ATCC BAA-245 / DSM 16553 / LMG 16656 / NCTC 13227 / J2315 / CF5610) (Burkholderia cepacia (strain J2315)).